Reading from the N-terminus, the 178-residue chain is ATP synthase subunit delta (178 aa).

It belongs to the ATPase delta chain family. As to quaternary structure, F-type ATPases have 2 components, F(1) - the catalytic core - and F(0) - the membrane proton channel. F(1) has five subunits: alpha(3), beta(3), gamma(1), delta(1), epsilon(1). F(0) has three main subunits: a(1), b(2) and c(10-14). The alpha and beta chains form an alternating ring which encloses part of the gamma chain. F(1) is attached to F(0) by a central stalk formed by the gamma and epsilon chains, while a peripheral stalk is formed by the delta and b chains.

It localises to the cell membrane. Its function is as follows. F(1)F(0) ATP synthase produces ATP from ADP in the presence of a proton or sodium gradient. F-type ATPases consist of two structural domains, F(1) containing the extramembraneous catalytic core and F(0) containing the membrane proton channel, linked together by a central stalk and a peripheral stalk. During catalysis, ATP synthesis in the catalytic domain of F(1) is coupled via a rotary mechanism of the central stalk subunits to proton translocation. Functionally, this protein is part of the stalk that links CF(0) to CF(1). It either transmits conformational changes from CF(0) to CF(1) or is implicated in proton conduction. This is ATP synthase subunit delta from Geobacillus stearothermophilus (Bacillus stearothermophilus).